A 494-amino-acid chain; its full sequence is Tetracenomycin biosynthesis bifunctional cyclase/O-methyl transferase TcmN (494 aa).

Residues 11 to 140 (VNAPFELVWD…TTTRANMERI (130 aa)) form a polyketide cyclase region. Ser67 serves as the catalytic Proton acceptor; for cyclase activity. Catalysis depends on proton donor; for cyclase activity residues Arg69 and Arg82. Residues 169 to 494 (LLLAASGRLA…TWTTLECRPV (326 aa)) are methyltransferase. Residues Asp358 and 384-386 (GDF) each bind S-adenosyl-L-methionine. The Proton acceptor; for methyltransferase activity role is filled by His405.

In the C-terminal section; belongs to the class I-like SAM-binding methyltransferase superfamily. Cation-independent O-methyltransferase family. In terms of assembly, the tetracenomycin polyketide synthase (TCM PKS) is composed of a ketosynthase complex (TcmKL), an acyl carrier protein (TcmM), a cyclase (TcmN) and a probable second cyclase (TcmJ). TcmN is a homodimer in solution.

The catalysed reaction is 10 malonyl-CoA + 8 H(+) = tetracenomycin F2 + 10 CO2 + 10 CoA + 2 H2O. It functions in the pathway antibiotic biosynthesis; tetracenomycin C biosynthesis. Its function is as follows. Involved in the biosynthesis of tetracenomycin C (TCM C). Part of a type II polyketide synthase (PKS) that catalyzes the synthesis of tetracenomycin F2 (TCM F2), a precursor of TCM C, from malonyl-CoA. The TcmN N-terminal domain, when coupled with the other components of the PKS, catalyzes the cyclization and aromatization of the linear polyketide intermediate. Catalyzes the cyclization of the first and second rings. In addition, the C-terminal domain acts as a methyltransferase. It catalyzes the specific O-methylation of tetracenomycin D3 (TCM D3) to TCM B3, using S-adenosyl-L-methionine as the methyl donor. The protein is Tetracenomycin biosynthesis bifunctional cyclase/O-methyl transferase TcmN of Streptomyces glaucescens.